Reading from the N-terminus, the 452-residue chain is Keratin, type I cytoskeletal 15 (452 aa).

Positions 1–97 are head; the sequence is MATTFLQTSS…GGDGGLLSGN (97 aa). Phosphoserine is present on residues serine 15, serine 16, serine 28, serine 33, and serine 47. Residues 98 to 133 form a coil 1A region; that stretch reads EKVTMQNLNDRLASYLDKVRALEQANTELEVKIRDW. Residues 98–410 enclose the IF rod domain; that stretch reads EKVTMQNLND…NLLEGQDAKM (313 aa). Threonine 124 is subject to Phosphothreonine. Residues 134–152 form a linker 1 region; it reads YQKQSPASPDRDYSHYFKT. Positions 153 to 244 are coil 1B; it reads MEEIRDKILA…KNHEEEMKEF (92 aa). The segment at 245–264 is linker 12; sequence SSQLAGQVNVEMDAAPGVDL. The segment at 265–406 is coil 2; that stretch reads TRMLAEMREQ…ATYRNLLEGQ (142 aa). Lysine 293 is covalently cross-linked (Glycyl lysine isopeptide (Lys-Gly) (interchain with G-Cter in SUMO2)). A phosphothreonine mark is found at threonine 294 and threonine 316. Residues 407–452 form a tail region; that stretch reads DAKMAGIGVREGSSGGGGSSSSSSNFHISVEESVDGKVVSSRKREI. The segment at 413 to 452 is disordered; sequence IGVREGSSGGGGSSSSSSNFHISVEESVDGKVVSSRKREI. Lysine 443 is covalently cross-linked (Glycyl lysine isopeptide (Lys-Gly) (interchain with G-Cter in SUMO1); alternate). A Glycyl lysine isopeptide (Lys-Gly) (interchain with G-Cter in SUMO2); alternate cross-link involves residue lysine 443.

This sequence belongs to the intermediate filament family. Heterotetramer of two type I and two type II keratins. Forms a heterodimer with KRT14. Interacts with PLEC isoform 1C, when in a heterodimer with KRT14. Interacts with NOD2. In terms of tissue distribution, expressed strongly in the basal cell layer at the tips of rete-like prominences (RLPs) of adult dorsal tongue, outer root sheath (ORS) of hair follicle and skin epidermis (at protein level).

Functionally, in the absence of KRT14, makes a bona fide, but ultrastructurally distinct keratin filament network with KRT5. This Mus musculus (Mouse) protein is Keratin, type I cytoskeletal 15 (Krt15).